Here is a 160-residue protein sequence, read N- to C-terminus: Phosphopantetheine adenylyltransferase (160 aa).

T10 contacts substrate. Residues 10–11 and H18 each bind ATP; that span reads TF. K42, L74, and R88 together coordinate substrate. ATP is bound by residues 89 to 91, E99, and 124 to 130; these read GLR and HGFLSST.

Belongs to the bacterial CoaD family. In terms of assembly, homohexamer. Mg(2+) serves as cofactor.

The protein localises to the cytoplasm. The catalysed reaction is (R)-4'-phosphopantetheine + ATP + H(+) = 3'-dephospho-CoA + diphosphate. It functions in the pathway cofactor biosynthesis; coenzyme A biosynthesis; CoA from (R)-pantothenate: step 4/5. In terms of biological role, reversibly transfers an adenylyl group from ATP to 4'-phosphopantetheine, yielding dephospho-CoA (dPCoA) and pyrophosphate. The polypeptide is Phosphopantetheine adenylyltransferase (Aliivibrio fischeri (strain MJ11) (Vibrio fischeri)).